Reading from the N-terminus, the 425-residue chain is Enolase (425 aa).

Glutamine 162 provides a ligand contact to (2R)-2-phosphoglycerate. The Proton donor role is filled by glutamate 204. Residues aspartate 241, glutamate 284, and aspartate 311 each contribute to the Mg(2+) site. Residues lysine 336, arginine 365, serine 366, and lysine 387 each coordinate (2R)-2-phosphoglycerate. Lysine 336 serves as the catalytic Proton acceptor.

It belongs to the enolase family. Mg(2+) is required as a cofactor.

The protein localises to the cytoplasm. Its subcellular location is the secreted. It localises to the cell surface. It carries out the reaction (2R)-2-phosphoglycerate = phosphoenolpyruvate + H2O. Its pathway is carbohydrate degradation; glycolysis; pyruvate from D-glyceraldehyde 3-phosphate: step 4/5. Functionally, catalyzes the reversible conversion of 2-phosphoglycerate (2-PG) into phosphoenolpyruvate (PEP). It is essential for the degradation of carbohydrates via glycolysis. This is Enolase from Brucella anthropi (strain ATCC 49188 / DSM 6882 / CCUG 24695 / JCM 21032 / LMG 3331 / NBRC 15819 / NCTC 12168 / Alc 37) (Ochrobactrum anthropi).